We begin with the raw amino-acid sequence, 421 residues long: ATP-dependent RNA helicase RhlB (421 aa).

Residues 9–37 carry the Q motif motif; sequence QKFSDFALHPKVVEALEKKGFHNCTPIQA. The region spanning 40 to 219 is the Helicase ATP-binding domain; the sequence is LPLTLAGRDV…FEQMNNAEYI (180 aa). 53 to 60 is a binding site for ATP; sequence AQTGTGKT. A DEAD box motif is present at residues 165-168; it reads DEAD. Positions 245–390 constitute a Helicase C-terminal domain; sequence RLLQTLIEEE…VSKYNPDALM (146 aa). The tract at residues 392–421 is disordered; it reads DLPKPLRLTRPRTGNGPRRTGTPRNRRRSG. Low complexity predominate over residues 402–414; sequence PRTGNGPRRTGTP.

It belongs to the DEAD box helicase family. RhlB subfamily. As to quaternary structure, component of the RNA degradosome, which is a multiprotein complex involved in RNA processing and mRNA degradation.

It localises to the cytoplasm. It carries out the reaction ATP + H2O = ADP + phosphate + H(+). Its function is as follows. DEAD-box RNA helicase involved in RNA degradation. Has RNA-dependent ATPase activity and unwinds double-stranded RNA. In Escherichia coli O17:K52:H18 (strain UMN026 / ExPEC), this protein is ATP-dependent RNA helicase RhlB.